The primary structure comprises 286 residues: Shikimate dehydrogenase (NADP(+)) (286 aa).

Shikimate contacts are provided by residues 20 to 22 and Thr-67; that span reads SLS. Catalysis depends on Lys-71, which acts as the Proton acceptor. Shikimate contacts are provided by Asn-92 and Asp-107. NADP(+) contacts are provided by residues 132 to 136 and Met-228; that span reads GAGGA. Tyr-230 lines the shikimate pocket. Position 251 (Gly-251) interacts with NADP(+).

It belongs to the shikimate dehydrogenase family. Homodimer.

The enzyme catalyses shikimate + NADP(+) = 3-dehydroshikimate + NADPH + H(+). It functions in the pathway metabolic intermediate biosynthesis; chorismate biosynthesis; chorismate from D-erythrose 4-phosphate and phosphoenolpyruvate: step 4/7. Its function is as follows. Involved in the biosynthesis of the chorismate, which leads to the biosynthesis of aromatic amino acids. Catalyzes the reversible NADPH linked reduction of 3-dehydroshikimate (DHSA) to yield shikimate (SA). In Geobacter sulfurreducens (strain ATCC 51573 / DSM 12127 / PCA), this protein is Shikimate dehydrogenase (NADP(+)).